A 203-amino-acid polypeptide reads, in one-letter code: Small ribosomal subunit protein uS4 (203 aa).

The tract at residues 15-46 is disordered; that stretch reads LGENIWGRPKSSVNRRSYGPGQHGQRRKSKVS. One can recognise an S4 RNA-binding domain in the interval 94–154; it reads QRLDMVVYRA…KKAKEMALIA (61 aa).

This sequence belongs to the universal ribosomal protein uS4 family. As to quaternary structure, part of the 30S ribosomal subunit. Contacts protein S5. The interaction surface between S4 and S5 is involved in control of translational fidelity.

Its function is as follows. One of the primary rRNA binding proteins, it binds directly to 16S rRNA where it nucleates assembly of the body of the 30S subunit. With S5 and S12 plays an important role in translational accuracy. The sequence is that of Small ribosomal subunit protein uS4 from Novosphingobium aromaticivorans (strain ATCC 700278 / DSM 12444 / CCUG 56034 / CIP 105152 / NBRC 16084 / F199).